A 299-amino-acid polypeptide reads, in one-letter code: Tetrahydromethanopterin S-methyltransferase subunit E (299 aa).

A run of 6 helical transmembrane segments spans residues 57-79, 95-115, 133-153, 158-178, 237-257, and 262-282; these read AISG…AWAL, GVAA…RTVG, IGPI…AAYL, LGNP…VGAI, GLCF…GNII, and VTKT…AAGI.

This sequence belongs to the MtrE family. As to quaternary structure, the complex is composed of 8 subunits; MtrA, MtrB, MtrC, MtrD, MtrE, MtrF, MtrG and MtrH.

It localises to the cell membrane. It catalyses the reaction 5-methyl-5,6,7,8-tetrahydromethanopterin + coenzyme M + 2 Na(+)(in) = 5,6,7,8-tetrahydromethanopterin + methyl-coenzyme M + 2 Na(+)(out). It functions in the pathway one-carbon metabolism; methanogenesis from CO(2); methyl-coenzyme M from 5,10-methylene-5,6,7,8-tetrahydromethanopterin: step 2/2. Part of a complex that catalyzes the formation of methyl-coenzyme M and tetrahydromethanopterin from coenzyme M and methyl-tetrahydromethanopterin. This is an energy-conserving, sodium-ion translocating step. This is Tetrahydromethanopterin S-methyltransferase subunit E from Methanococcus maripaludis (strain C5 / ATCC BAA-1333).